The following is a 175-amino-acid chain: MSQALTLARPYGRAAFAIAREGGNFAPWSDALAFSAQVAGDPRVAALLLNPALGQEQAVTLLAPPQAGEDYLRFLGVLADAQRLSLLPEVAGLYEHLRAEAEHVVKATVTSAAAMSQTELDTIAAALKKRFGRDVDITTAVDASLIGGAVIDTGDVVIDGSLKGKLARLQSSLAH.

It belongs to the ATPase delta chain family. In terms of assembly, F-type ATPases have 2 components, F(1) - the catalytic core - and F(0) - the membrane proton channel. F(1) has five subunits: alpha(3), beta(3), gamma(1), delta(1), epsilon(1). F(0) has three main subunits: a(1), b(2) and c(10-14). The alpha and beta chains form an alternating ring which encloses part of the gamma chain. F(1) is attached to F(0) by a central stalk formed by the gamma and epsilon chains, while a peripheral stalk is formed by the delta and b chains.

It localises to the cell inner membrane. F(1)F(0) ATP synthase produces ATP from ADP in the presence of a proton or sodium gradient. F-type ATPases consist of two structural domains, F(1) containing the extramembraneous catalytic core and F(0) containing the membrane proton channel, linked together by a central stalk and a peripheral stalk. During catalysis, ATP synthesis in the catalytic domain of F(1) is coupled via a rotary mechanism of the central stalk subunits to proton translocation. Its function is as follows. This protein is part of the stalk that links CF(0) to CF(1). It either transmits conformational changes from CF(0) to CF(1) or is implicated in proton conduction. This is ATP synthase subunit delta from Xanthomonas axonopodis pv. citri (strain 306).